The primary structure comprises 249 residues: Triosephosphate isomerase (249 aa).

The substrate site is built by Asn-12 and Lys-14. The residue at position 14 (Lys-14) is an N6-acetyllysine. Tyr-68 is subject to 3'-nitrotyrosine. Position 80 is a phosphoserine (Ser-80). His-96 (electrophile) is an active-site residue. Ser-106 is subject to Phosphoserine. Lys-142 is covalently cross-linked (Glycyl lysine isopeptide (Lys-Gly) (interchain with G-Cter in SUMO1)). Lys-149 carries the post-translational modification N6-succinyllysine. Lys-156 bears the N6-acetyllysine; alternate mark. Residue Lys-156 is modified to N6-succinyllysine; alternate. The residue at position 159 (Ser-159) is a Phosphoserine. The active-site Proton acceptor is Glu-166. Phosphothreonine is present on Thr-173. At Lys-194 the chain carries N6-acetyllysine; alternate. At Lys-194 the chain carries N6-succinyllysine; alternate. The residue at position 194 (Lys-194) is an N6-methyllysine; alternate. The residue at position 198 (Ser-198) is a Phosphoserine. Residue Tyr-209 is modified to 3'-nitrotyrosine. A Phosphoserine modification is found at Ser-212. Residue Thr-214 is modified to Phosphothreonine. Phosphoserine is present on Ser-223. Lys-238 is subject to N6-acetyllysine.

Belongs to the triosephosphate isomerase family. Homodimer.

The protein localises to the cytoplasm. It carries out the reaction dihydroxyacetone phosphate = methylglyoxal + phosphate. The catalysed reaction is D-glyceraldehyde 3-phosphate = dihydroxyacetone phosphate. Its pathway is carbohydrate degradation; glycolysis; D-glyceraldehyde 3-phosphate from glycerone phosphate: step 1/1. The protein operates within carbohydrate biosynthesis; gluconeogenesis. Its function is as follows. Triosephosphate isomerase is an extremely efficient metabolic enzyme that catalyzes the interconversion between dihydroxyacetone phosphate (DHAP) and D-glyceraldehyde-3-phosphate (G3P) in glycolysis and gluconeogenesis. It is also responsible for the non-negligible production of methylglyoxal a reactive cytotoxic side-product that modifies and can alter proteins, DNA and lipids. The protein is Triosephosphate isomerase (TPI1) of Gorilla gorilla gorilla (Western lowland gorilla).